Reading from the N-terminus, the 109-residue chain is uncharacterized protein (109 aa).

Transmembrane regions (helical) follow at residues 24-44 and 68-88; these read SLGI…SAFV and VIVL…SIFI.

Its subcellular location is the membrane. This is an uncharacterized protein from Saccharomyces cerevisiae (strain ATCC 204508 / S288c) (Baker's yeast).